The following is a 284-amino-acid chain: TnP I resolvase (284 aa).

In terms of domain architecture, Core-binding (CB) spans Met1–Ile84. The 176-residue stretch at Ala107–Glu282 folds into the Tyr recombinase domain. Catalysis depends on residues Arg145, Lys170, His234, Arg237, and His260. Catalysis depends on Tyr269, which acts as the O-(3'-phospho-DNA)-tyrosine intermediate.

This sequence belongs to the 'phage' integrase family.

Resolvase catalyzes the resolution (a site-specific recombination) of the cointegrated replicon to yield the final transposition products. This chain is TnP I resolvase (tnpI), found in Bacillus thuringiensis.